A 251-amino-acid polypeptide reads, in one-letter code: MPKRDLPWRSMAGTSKVSRNANYSPRAGIGPRINKAAEWVNRPMYRKPRMYRTLRTTDVARGCEGPCKVQSFEQRHDISHIGKVMCISDVTRGNGITHRVGKRFCVKSVYILGKIWMDENIKLKNHTNSVMFWLVRDRRPYGTPMDIWTVFNMFDNEPSTATVKNDLRDRYQVMHKFYGKVTGGQYASNEQAIVKRFWKVNNHVVYNHQEAGKYENHTENALLLYMACTHASNPVYATLKIRIYFYDSITN.

A Bipartite nuclear localization signal motif is present at residues 3–20 (KRDLPWRSMAGTSKVSRN). The short motif at 35-49 (KAAEWVNRPMYRKPR) is the Nuclear localization signal element. A zinc finger lies at 63–80 (CEGPCKVQSFEQRHDISH). A Nuclear export signal motif is present at residues 96 to 117 (ITHRVGKRFCVKSVYILGKIWM). The Bipartite nuclear localization signal signature appears at 195 to 242 (KRFWKVNNHVVYNHQEAGKYENHTENALLLYMACTHASNPVYATLKIR).

Belongs to the geminiviridae capsid protein family. As to quaternary structure, homomultimer. Binds to single-stranded and double-stranded viral DNA. Interacts (via nuclear localization signals) with host importin alpha-1a.

The protein resides in the virion. Its subcellular location is the host nucleus. Encapsidates the viral DNA into characteristic twinned ('geminate') particles. Binds the genomic viral ssDNA and shuttles it into and out of the cell nucleus. The CP of bipartite geminiviruses is not required for cell-to-cell or systemic movement. This is Capsid protein from Tomato mottle virus (isolate Florida) (ToMoV).